A 663-amino-acid polypeptide reads, in one-letter code: Heparan-alpha-glucosaminide N-acetyltransferase (663 aa).

Residues 1-24 are disordered; it reads MTGARASAAEQRRAGRSGQARAAE. The Lumenal, vesicle segment spans residues 1 to 190; the sequence is MTGARASAAE…LAVNEDPVDS (190 aa). 3 N-linked (GlcNAc...) asparagine glycosylation sites follow: Asn-94, Asn-142, and Asn-162. A disulfide bond links Cys-151 and Cys-462. Residues 191–211 traverse the membrane as a helical segment; sequence NLPVSIAFLIGLAVIIVISFL. Residues 212-275 lie on the Cytoplasmic side of the membrane; sequence RLLLSLDDFN…PRLRSVDTFR (64 aa). Ser-243 and Ser-245 each carry phosphoserine. A helical membrane pass occupies residues 276–296; the sequence is GIALILMVFVNYGGGKYWYFK. His-297 is a catalytic residue. The Lumenal, vesicle portion of the chain corresponds to 297 to 302; that stretch reads HASWNG. A helical membrane pass occupies residues 303–323; it reads LTVADLVFPWFVFIMGSSIFL. Over 324–345 the chain is Cytoplasmic; that stretch reads SMTSILQRGCSKFRLLGKIAWR. The chain crosses the membrane as a helical span at residues 346-366; it reads SFLLICIGIIIVNPNYCLGPL. Residues 367-374 are Lumenal, vesicle-facing; the sequence is SWDKVRIP. Residues 375–395 traverse the membrane as a helical segment; that stretch reads GVLQRLGVTYFVVAVLELLFA. Topologically, residues 396-420 are cytoplasmic; it reads KPVPEHCASERSCLSLRDITSSWPQ. A helical membrane pass occupies residues 421–441; that stretch reads WLLILVLEGLWLGLTFLLPVP. The Lumenal, vesicle portion of the chain corresponds to 442 to 500; it reads GCPTGYLGPGGIGDFGKYPNCTGGAAGYIDRLLLGDDHLYQHPSSAVLYHTEVAYDPEG. A helical transmembrane segment spans residues 501–521; that stretch reads ILGTINSIVMAFLGVQAGKIL. The Cytoplasmic segment spans residues 522–529; it reads LYYKARTK. A helical membrane pass occupies residues 530-550; that stretch reads DILIRFTAWCCILGLISVALT. Topologically, residues 551 to 564 are lumenal, vesicle; the sequence is KVSENEGFIPVNKN. Residues 565-585 form a helical membrane-spanning segment; the sequence is LWSLSYVTTLSSFAFFILLVL. At 586 to 592 the chain is on the cytoplasmic side; the sequence is YPVVDVK. A helical membrane pass occupies residues 593-613; it reads GLWTGTPFFYPGMNSILVYVG. The Lumenal, vesicle portion of the chain corresponds to 614–634; sequence HEVFENYFPFQWKLKDNQSHK. A lysosomal targeting region region spans residues 624–635; the sequence is QWKLKDNQSHKE. A helical membrane pass occupies residues 635 to 655; it reads EHLTQNIVATALWVLIAYILY. Over 656–663 the chain is Cytoplasmic; sequence RKKIFWKI.

As to quaternary structure, homooligomer. Homooligomerization is necessary for enzyme activity. In terms of processing, undergoes intralysosomal proteolytic cleavage; occurs within the end of the first and/or the beginning of the second luminal domain and is essential for the activation of the enzyme. Glycosylated. As to expression, widely expressed, with highest level in leukocytes, heart, liver, skeletal muscle, lung, placenta and liver.

The protein localises to the lysosome membrane. It carries out the reaction alpha-D-glucosaminyl-[heparan sulfate](n) + acetyl-CoA = N-acetyl-alpha-D-glucosaminyl-[heparan sulfate](n) + CoA + H(+). Functionally, lysosomal acetyltransferase that acetylates the non-reducing terminal alpha-glucosamine residue of intralysosomal heparin or heparan sulfate, converting it into a substrate for luminal alpha-N-acetyl glucosaminidase. The protein is Heparan-alpha-glucosaminide N-acetyltransferase (HGSNAT) of Homo sapiens (Human).